Reading from the N-terminus, the 260-residue chain is 5'-nucleotidase SurE (260 aa).

A divalent metal cation contacts are provided by Asp8, Asp9, Ser39, and Asn96.

Belongs to the SurE nucleotidase family. Requires a divalent metal cation as cofactor.

The protein localises to the cytoplasm. It catalyses the reaction a ribonucleoside 5'-phosphate + H2O = a ribonucleoside + phosphate. In terms of biological role, nucleotidase that shows phosphatase activity on nucleoside 5'-monophosphates. The chain is 5'-nucleotidase SurE from Moorella thermoacetica (strain ATCC 39073 / JCM 9320).